A 675-amino-acid chain; its full sequence is DNA gyrase subunit B (675 aa).

In terms of domain architecture, Toprim spans 453-567 (SELYVVEGDS…NGHIFLAQPP (115 aa)). Mg(2+)-binding residues include Glu459, Asp532, and Asp534.

The protein belongs to the type II topoisomerase GyrB family. In terms of assembly, heterotetramer, composed of two GyrA and two GyrB chains. In the heterotetramer, GyrA contains the active site tyrosine that forms a transient covalent intermediate with DNA, while GyrB binds cofactors and catalyzes ATP hydrolysis. Mg(2+) is required as a cofactor. The cofactor is Mn(2+). Ca(2+) serves as cofactor.

The protein resides in the cytoplasm. It catalyses the reaction ATP-dependent breakage, passage and rejoining of double-stranded DNA.. Inhibited by 4-quinoline drugs (nalidixic acid, ciprofloxacin, ofloxacin), although it is much less sensitive than the corresponding enzyme from E.coli. GyrB intrinsic ATPase activity inhibited by aminopyrazinamide and pyrrolamide derivatives. A type II topoisomerase that negatively supercoils closed circular double-stranded (ds) DNA in an ATP-dependent manner to modulate DNA topology and maintain chromosomes in an underwound state. Negative supercoiling favors strand separation, and DNA replication, transcription, recombination and repair, all of which involve strand separation. Also able to catalyze the interconversion of other topological isomers of dsDNA rings, including catenanes and knotted rings. Type II topoisomerases break and join 2 DNA strands simultaneously in an ATP-dependent manner. In Mycolicibacterium smegmatis (strain ATCC 700084 / mc(2)155) (Mycobacterium smegmatis), this protein is DNA gyrase subunit B.